Reading from the N-terminus, the 976-residue chain is Ephrin type-A receptor 2 (976 aa).

Positions methionine 1 to alanine 23 are cleaved as a signal peptide. Positions methionine 1–glutamine 206 are mediates interaction with CLDN4. Residues glutamine 25–valine 537 lie on the Extracellular side of the membrane. Positions glutamate 28–glutamine 206 constitute an Eph LBD domain. 2 disulfide bridges follow: cysteine 70–cysteine 188 and cysteine 105–cysteine 115. Positions proline 328–valine 432 constitute a Fibronectin type-III 1 domain. N-linked (GlcNAc...) asparagine glycosylation is found at asparagine 407 and asparagine 435. The Fibronectin type-III 2 domain maps to glutamate 438–proline 529. A helical membrane pass occupies residues isoleucine 538–isoleucine 558. Topologically, residues histidine 559–isoleucine 976 are cytoplasmic. Phosphoserine is present on serine 570. Phosphotyrosine is present on tyrosine 575. The residue at position 579 (serine 579) is a Phosphoserine. A Phosphotyrosine; by autocatalysis modification is found at tyrosine 588. Phosphotyrosine is present on tyrosine 594. A mediates interaction with ARHGEF16 region spans residues threonine 606–phenylalanine 906. The 263-residue stretch at valine 613–isoleucine 875 folds into the Protein kinase domain. Isoleucine 619–valine 627 provides a ligand contact to ATP. Tyrosine 628 bears the Phosphotyrosine mark. ATP is bound at residue lysine 646. Position 647 is a phosphothreonine (threonine 647). Tyrosine 735 is subject to Phosphotyrosine; by autocatalysis. The Proton acceptor role is filled by aspartate 739. At tyrosine 772 the chain carries Phosphotyrosine. Residues serine 869, serine 892, serine 897, and serine 901 each carry the phosphoserine modification. Residues aspartate 886–isoleucine 976 form a negatively regulates interaction with ARHGEF16 region. Residues valine 904–glutamine 968 enclose the SAM domain. Tyrosine 921 is subject to Phosphotyrosine; by autocatalysis. A Phosphotyrosine modification is found at tyrosine 930. The PDZ-binding motif lies at isoleucine 974–isoleucine 976.

This sequence belongs to the protein kinase superfamily. Tyr protein kinase family. Ephrin receptor subfamily. Homodimer. Interacts with SLA. Interacts (phosphorylated form) with VAV2, VAV3 and PI3-kinase p85 subunit (PIK3R1, PIK3R2 or PIK3R3); critical for the EFNA1-induced activation of RAC1 which stimulates cell migration. Interacts with INPPL1; regulates activated EPHA2 endocytosis and degradation. Interacts (inactivated form) with PTK2/FAK1 and interacts (EFNA1 ligand-activated form) with PTPN11; regulates integrin-mediated adhesion. Interacts with ARHGEF16, DOCK4 and ELMO2; mediates ligand-independent activation of RAC1 which stimulates cell migration. Interacts with CLDN4; phosphorylates CLDN4 and may regulate tight junctions. Interacts with ACP1. Interacts with ANKS1A. Interacts with CEMIP. Interacts with NCK1; may regulate EPHA2 activity in cell migration and adhesion. Interacts with TIMD4. Post-translationally, autophosphorylates. Phosphorylated on tyrosine upon binding and activation by EFNA1. Phosphorylated residues Tyr-588 and Tyr-594 are required for binding VAV2 and VAV3 while phosphorylated residues Tyr-735 and Tyr-930 are required for binding PI3-kinase p85 subunit (PIK3R1, PIK3R2 or PIK3R3). These phosphorylated residues are critical for recruitment of VAV2 and VAV3 and PI3-kinase p85 subunit which transduce downstream signaling to activate RAC1 GTPase and cell migration. Dephosphorylation of Tyr-930 by PTPRF prevents the interaction of EPHA2 with NCK1. Phosphorylated at Ser-897 by PKB; serum-induced phosphorylation which targets EPHA2 to the cell leading edge and stimulates cell migration. Phosphorylation by PKB is inhibited by EFNA1-activated EPHA2 which regulates PKB activity via a reciprocal regulatory loop. Phosphorylated at Ser-897 in response to TNF by RPS6KA1 and RPS6KA3; RPS6KA-EPHA2 signaling pathway controls cell migration. Phosphorylated at Ser-897 by PKA; blocks cell retraction induced by EPHA2 kinase activity. Dephosphorylated by ACP1. In terms of processing, ubiquitinated by CHIP/STUB1. Ubiquitination is regulated by the HSP90 chaperone and regulates the receptor stability and activity through proteasomal degradation. ANKS1A prevents ubiquitination and degradation.

It is found in the cell membrane. The protein resides in the cell projection. It localises to the ruffle membrane. The protein localises to the lamellipodium membrane. Its subcellular location is the cell junction. It is found in the focal adhesion. The enzyme catalyses L-tyrosyl-[protein] + ATP = O-phospho-L-tyrosyl-[protein] + ADP + H(+). Its function is as follows. Receptor tyrosine kinase which binds promiscuously membrane-bound ephrin-A family ligands residing on adjacent cells, leading to contact-dependent bidirectional signaling into neighboring cells. The signaling pathway downstream of the receptor is referred to as forward signaling while the signaling pathway downstream of the ephrin ligand is referred to as reverse signaling. Activated by the ligand ephrin-A1/EFNA1 regulates migration, integrin-mediated adhesion, proliferation and differentiation of cells. Regulates cell adhesion and differentiation through DSG1/desmoglein-1 and inhibition of the ERK1/ERK2 signaling pathway. May also participate in UV radiation-induced apoptosis and have a ligand-independent stimulatory effect on chemotactic cell migration. During development, may function in distinctive aspects of pattern formation and subsequently in development of several fetal tissues. Involved for instance in angiogenesis, in early hindbrain development and epithelial proliferation and branching morphogenesis during mammary gland development. Engaged by the ligand ephrin-A5/EFNA5 may regulate lens fiber cells shape and interactions and be important for lens transparency development and maintenance. With ephrin-A2/EFNA2 may play a role in bone remodeling through regulation of osteoclastogenesis and osteoblastogenesis. In Macaca fascicularis (Crab-eating macaque), this protein is Ephrin type-A receptor 2 (EPHA2).